A 525-amino-acid chain; its full sequence is Probable feruloyl esterase B-1 (525 aa).

A signal peptide spans 1–20; that stretch reads MMRWFLLIGLASAAATDSSA. Disulfide bonds link C26-C75, C61-C114, C187-C442, C256-C273, C282-C292, and C502-C524. 3 N-linked (GlcNAc...) asparagine glycosylation sites follow: N51, N80, and N98. Catalysis depends on S188, which acts as the Acyl-ester intermediate. Ca(2+) contacts are provided by D257, D260, A262, and D264. 3 N-linked (GlcNAc...) asparagine glycosylation sites follow: N283, N288, and N351. Active-site charge relay system residues include D401 and H441.

This sequence belongs to the tannase family.

The protein localises to the secreted. It catalyses the reaction feruloyl-polysaccharide + H2O = ferulate + polysaccharide.. Involved in degradation of plant cell walls. Hydrolyzes the feruloyl-arabinose ester bond in arabinoxylans as well as the feruloyl-galactose and feruloyl-arabinose ester bonds in pectin. The protein is Probable feruloyl esterase B-1 (faeB-1) of Neosartorya fischeri (strain ATCC 1020 / DSM 3700 / CBS 544.65 / FGSC A1164 / JCM 1740 / NRRL 181 / WB 181) (Aspergillus fischerianus).